A 176-amino-acid chain; its full sequence is MDGSSDNLIAVGRISGTHGIRGQLRLHSYSGNLESLQAAKNVLIRFPAGGTRQIQLKKAAYHSGKFLLTLEGFDTIEKAQELAGAELLLQREQLPPPDADEYYWHDLLGLSVVTNEGQALGIIKDILETGANDVYLVRDDATKREYLIPAIASVISSVNIHTGTMTITPLEGLLDL.

A PRC barrel domain is found at 99-173; that stretch reads ADEYYWHDLL…TMTITPLEGL (75 aa).

It belongs to the RimM family. As to quaternary structure, binds ribosomal protein uS19.

The protein localises to the cytoplasm. Its function is as follows. An accessory protein needed during the final step in the assembly of 30S ribosomal subunit, possibly for assembly of the head region. Essential for efficient processing of 16S rRNA. May be needed both before and after RbfA during the maturation of 16S rRNA. It has affinity for free ribosomal 30S subunits but not for 70S ribosomes. This chain is Ribosome maturation factor RimM, found in Trichlorobacter lovleyi (strain ATCC BAA-1151 / DSM 17278 / SZ) (Geobacter lovleyi).